The sequence spans 141 residues: ATP synthase epsilon chain (141 aa).

It belongs to the ATPase epsilon chain family. F-type ATPases have 2 components, CF(1) - the catalytic core - and CF(0) - the membrane proton channel. CF(1) has five subunits: alpha(3), beta(3), gamma(1), delta(1), epsilon(1). CF(0) has three main subunits: a, b and c.

It is found in the cell inner membrane. In terms of biological role, produces ATP from ADP in the presence of a proton gradient across the membrane. This Bordetella petrii (strain ATCC BAA-461 / DSM 12804 / CCUG 43448) protein is ATP synthase epsilon chain.